A 514-amino-acid polypeptide reads, in one-letter code: Pleiotropic regulator 1 (514 aa).

Position 1 is an N-acetylmethionine (Met-1). A Phosphoserine modification is found at Ser-119. A disordered region spans residues 135 to 160 (KADANRTAPSGSEYRHPGASDRPQPT). Ser-201 is subject to Phosphoserine. WD repeat units lie at residues 202–241 (GHLGWVRCIAVEPGNQWFVTGSADRTIKIWDLASGKLKLS), 244–283 (GHISTVRGVIVSTRSPYLFSCGEDKQVKCWDLEYNKVIRH), 286–325 (GHLSAVYGLDLHPTIDVLVTCSRDSTARIWDVRTKASVHT), 328–367 (GHTNAVATVRCQAAEPQIITGSHDTTIRLWDLVAGKTRVT), 370–410 (NHKK…QNLS), 411–449 (GHNAIINTLTVNSDGVLVSGADNGTMHLWDWRTGYNFQR), and 460–499 (DSESGIFACAFDQSESRLLTAEADKTIKVYREDDTATEET). Ser-391 is subject to Phosphoserine.

This sequence belongs to the WD repeat PRL1/PRL2 family. In terms of assembly, identified in the spliceosome C complex. Component of the PRP19-CDC5L splicing complex composed of a core complex comprising a homotetramer of PRPF19, CDC5L, PLRG1 and BCAS2, and at least three less stably associated proteins CTNNBL1, CWC15 and HSPA8. Interacts (via its WD40 repeat domain) directly with CDC5L (via its C-terminal); the interaction is required for mRNA splicing but not for spliceosome assembly. Component of the minor spliceosome, which splices U12-type introns. Within this complex, interacts with CRIPT. Also interacts directly in the complex with BCAS2 and PRPF19. Interacts with USB1.

The protein resides in the nucleus. Its subcellular location is the nucleus speckle. In terms of biological role, involved in pre-mRNA splicing as component of the spliceosome. Component of the PRP19-CDC5L complex that forms an integral part of the spliceosome and is required for activating pre-mRNA splicing. As a component of the minor spliceosome, involved in the splicing of U12-type introns in pre-mRNAs. This is Pleiotropic regulator 1 (PLRG1) from Homo sapiens (Human).